The following is a 220-amino-acid chain: Chloramphenicol acetyltransferase (220 aa).

The active-site Proton acceptor is the histidine 195.

Belongs to the chloramphenicol acetyltransferase family. In terms of assembly, homotrimer.

The catalysed reaction is chloramphenicol + acetyl-CoA = chloramphenicol 3-acetate + CoA. In terms of biological role, this enzyme is an effector of chloramphenicol resistance in bacteria. The chain is Chloramphenicol acetyltransferase (cat) from Streptomyces acrimycini.